An 89-amino-acid chain; its full sequence is Small ribosomal subunit protein bS20 (89 aa).

This sequence belongs to the bacterial ribosomal protein bS20 family.

Binds directly to 16S ribosomal RNA. The chain is Small ribosomal subunit protein bS20 from Wolbachia pipientis wMel.